The sequence spans 144 residues: Large ribosomal subunit protein uL15 (144 aa).

The interval 1–48 is disordered; the sequence is MIKLECLQDPSPRKRRTKLLGRGPSSGHGKTSGRGHKGDGSRSGYKRR.

It belongs to the universal ribosomal protein uL15 family. As to quaternary structure, part of the 50S ribosomal subunit.

Functionally, binds to the 23S rRNA. The protein is Large ribosomal subunit protein uL15 of Chlamydia trachomatis serovar L2 (strain ATCC VR-902B / DSM 19102 / 434/Bu).